The primary structure comprises 208 residues: ATP-dependent dethiobiotin synthetase BioD (208 aa).

11-16 (EVGKTF) contributes to the ATP binding site. Thr15 contributes to the Mg(2+) binding site. Residue Lys31 is part of the active site. Ser35 is a substrate binding site. Residues Asp42, 95–98 (ETSG), and 155–156 (NQ) contribute to the ATP site. 2 residues coordinate Mg(2+): Asp42 and Glu95.

The protein belongs to the dethiobiotin synthetase family. As to quaternary structure, homodimer. Mg(2+) is required as a cofactor.

Its subcellular location is the cytoplasm. It catalyses the reaction (7R,8S)-7,8-diammoniononanoate + CO2 + ATP = (4R,5S)-dethiobiotin + ADP + phosphate + 3 H(+). It functions in the pathway cofactor biosynthesis; biotin biosynthesis; biotin from 7,8-diaminononanoate: step 1/2. Functionally, catalyzes a mechanistically unusual reaction, the ATP-dependent insertion of CO2 between the N7 and N8 nitrogen atoms of 7,8-diaminopelargonic acid (DAPA, also called 7,8-diammoniononanoate) to form a ureido ring. The sequence is that of ATP-dependent dethiobiotin synthetase BioD from Chlamydia felis (strain Fe/C-56) (Chlamydophila felis).